The primary structure comprises 506 residues: Glutamate--tRNA ligase (506 aa).

Residues 29-39 carry the 'HIGH' region motif; the sequence is PSPTGTPHVGL. The short motif at 273–277 is the 'KMSKS' region element; that stretch reads KLSKR. K276 is an ATP binding site.

The protein belongs to the class-I aminoacyl-tRNA synthetase family. Glutamate--tRNA ligase type 1 subfamily. In terms of assembly, monomer.

The protein localises to the cytoplasm. It carries out the reaction tRNA(Glu) + L-glutamate + ATP = L-glutamyl-tRNA(Glu) + AMP + diphosphate. Its function is as follows. Catalyzes the attachment of glutamate to tRNA(Glu) in a two-step reaction: glutamate is first activated by ATP to form Glu-AMP and then transferred to the acceptor end of tRNA(Glu). This Paenarthrobacter aurescens (strain TC1) protein is Glutamate--tRNA ligase.